A 240-amino-acid polypeptide reads, in one-letter code: Ribonuclease 3 (240 aa).

Positions 9 to 141 (VEELQKRLGV…LLAALYLDQG (133 aa)) constitute an RNase III domain. Mg(2+) is bound at residue Glu54. Asp58 is a catalytic residue. 2 residues coordinate Mg(2+): Asp127 and Glu130. Glu130 is a catalytic residue. One can recognise a DRBM domain in the interval 168-237 (DYKTALQEIV…ARKAYEKLVA (70 aa)).

It belongs to the ribonuclease III family. As to quaternary structure, homodimer. Mg(2+) is required as a cofactor.

The protein resides in the cytoplasm. The catalysed reaction is Endonucleolytic cleavage to 5'-phosphomonoester.. Its function is as follows. Digests double-stranded RNA. Involved in the processing of primary rRNA transcript to yield the immediate precursors to the large and small rRNAs (23S and 16S). Processes some mRNAs, and tRNAs when they are encoded in the rRNA operon. Processes pre-crRNA and tracrRNA of type II CRISPR loci if present in the organism. In Thermotoga neapolitana (strain ATCC 49049 / DSM 4359 / NBRC 107923 / NS-E), this protein is Ribonuclease 3.